The primary structure comprises 130 residues: Small ribosomal subunit protein uS9 (130 aa).

The segment at 98-130 is disordered; it reads LKRAGLLTRDPRMKERKKPGLKKARRSPQFSKR. The span at 111 to 130 shows a compositional bias: basic residues; it reads KERKKPGLKKARRSPQFSKR.

It belongs to the universal ribosomal protein uS9 family.

The sequence is that of Small ribosomal subunit protein uS9 from Staphylococcus saprophyticus subsp. saprophyticus (strain ATCC 15305 / DSM 20229 / NCIMB 8711 / NCTC 7292 / S-41).